A 937-amino-acid chain; its full sequence is MCSEFLSELHWEDGFAIPVANQENKILEDQLAKLREEKSNLQDQLHDYEERINSMTSHLKNVNQEFLFTQSLYKARESEIESEEHFKAIAERELGRVKNETQLLEKEMAIIRERKSQMENNIFKTTQKLDDLKCQMNWDQQALEAWLEESAHKDSDSLTLQKYSQQDDNKIRALTLQLEKLTMEYNEKRKLLDSELTETLSAQLELDKAAQDFRKIHLERQELIQQWENTIEQMQRRDQEIDNCALALSRIKQEAREKEGVVKEKIKFLENEVENNIEYERKISVAERKVSKCRMDYQRHEGNRSQLKDELDTLKTTLNRTSSDLQALRKNISKVKKDIFDETLRLQKLKHHNEVVKHKLKMITEKTLSIEEKATNMEDMLKEEEKGLKEVEVQLGIVKDVLFKKVQELQNEIAKEKALVSEIEGTRSSLKHLNKQLHKLDFETLKQQEIMYSQDFYIQQVERRMSRLKGEINSEEKQALEAKILELKKTMDEKKSTLSLLESQIKKLHNDLYFIKKSNGKNNDEKESLMNKISELNLFIDRSEKELSKAKAVKEDMMIEDNLLKLQVKRARELLYSKAEEVLSLEKRKQQLGKDMEERAEEIKVHKAMLTSQIRCVEQQRKTMSSEFHERLSKIDKLKNRYEILTVVMLPPEGEEEKTQSYYVIKAAQEKEELQREGDSLDAKINKAEKEIYALQNTLQVLNSCNSNYKQSFKKVTPSSDEYALKIQLEEQKRTADERYRCKQRQIRELQEDIQSMENTFEVIGHLANNAKEKLTEKQTLAFQLRKETEEQKPKLQRITKQCGRLRREIRILKQTDNETLEEQDIQLREIIQFHKDIDQMLVNAMENAEIHAIFKTYFEQNGLELPTARGPSSRSSSQSSSLSSFRSLEDVTLQSPPTAKVIQLRFPEPPPATNDSSRSASSGSNSNIPKEKKLSK.

Coiled-coil stretches lie at residues 16-137, 165-339, 365-615, and 664-816; these read AIPV…CQMN, QQDD…KKDI, EKTL…SQIR, and VIKA…LKQT. Residues 866–937 are disordered; that stretch reads LPTARGPSSR…NIPKEKKLSK (72 aa). Positions 873–887 are enriched in low complexity; that stretch reads SSRSSSQSSSLSSFR. 2 positions are modified to phosphoserine: serine 888 and serine 896. Residues 915–928 are compositionally biased toward low complexity; it reads NDSSRSASSGSNSN.

It belongs to the CCDC39 family. As to expression, strongly expressed in tissues rich in ciliated cells. Expressed in olfactory and vomeronasal sensory neurons and the respiratory epithelium. Expressed in node cells carrying motile cilia, in upper and lower airways, and in ependymal and choroid plexus cells.

It is found in the cytoplasm. The protein resides in the cytoskeleton. It localises to the cilium axoneme. In terms of biological role, required for assembly of dynein regulatory complex (DRC) and inner dynein arm (IDA) complexes, which are responsible for ciliary beat regulation, thereby playing a central role in motility in cilia and flagella. Probably acts together with CCDC40 to form a molecular ruler that determines the 96 nanometer (nm) repeat length and arrangements of components in cilia and flagella. Not required for outer dynein arm complexes assembly. The polypeptide is Coiled-coil domain-containing protein 39 (Mus musculus (Mouse)).